Consider the following 342-residue polypeptide: N-acetyl-gamma-glutamyl-phosphate reductase (342 aa).

Cysteine 149 is an active-site residue.

This sequence belongs to the NAGSA dehydrogenase family. Type 1 subfamily.

The protein localises to the cytoplasm. The catalysed reaction is N-acetyl-L-glutamate 5-semialdehyde + phosphate + NADP(+) = N-acetyl-L-glutamyl 5-phosphate + NADPH + H(+). The protein operates within amino-acid biosynthesis; L-arginine biosynthesis; N(2)-acetyl-L-ornithine from L-glutamate: step 3/4. Functionally, catalyzes the NADPH-dependent reduction of N-acetyl-5-glutamyl phosphate to yield N-acetyl-L-glutamate 5-semialdehyde. This chain is N-acetyl-gamma-glutamyl-phosphate reductase, found in Cereibacter sphaeroides (strain KD131 / KCTC 12085) (Rhodobacter sphaeroides).